Here is a 263-residue protein sequence, read N- to C-terminus: Microtubule-associated protein RP/EB family member 1 (263 aa).

The Calponin-homology (CH) domain occupies 14–116 (NLSRHDMLAW…FVQWFKKFFD (103 aa)). Positions 180-250 (KKAAGDDESA…LYATDEGFVI (71 aa)) constitute an EB1 C-terminal domain.

The protein belongs to the MAPRE family.

It is found in the cytoplasm. The protein localises to the cytoskeleton. Its subcellular location is the microtubule organizing center. It localises to the centrosome. The protein resides in the golgi apparatus. It is found in the spindle. The protein localises to the spindle pole. Functionally, plus-end tracking protein (+TIP) that binds to the plus-end of microtubules and regulates the dynamics of the microtubule cytoskeleton. Promotes cytoplasmic microtubule nucleation and elongation. Involved in mitotic spindle positioning by stabilizing microtubules and promoting dynamic connection between astral microtubules and the cortex during mitotic chromosome segregation. The polypeptide is Microtubule-associated protein RP/EB family member 1 (MAPRE1) (Coturnix coturnix (Common quail)).